A 61-amino-acid polypeptide reads, in one-letter code: Small ribosomal subunit protein uS14 (61 aa).

Residues Cys24, Cys27, Cys40, and Cys43 each contribute to the Zn(2+) site.

It belongs to the universal ribosomal protein uS14 family. Zinc-binding uS14 subfamily. As to quaternary structure, part of the 30S ribosomal subunit. Contacts proteins S3 and S10. It depends on Zn(2+) as a cofactor.

In terms of biological role, binds 16S rRNA, required for the assembly of 30S particles and may also be responsible for determining the conformation of the 16S rRNA at the A site. This chain is Small ribosomal subunit protein uS14, found in Desulfatibacillum aliphaticivorans.